We begin with the raw amino-acid sequence, 442 residues long: Metacaspase-5 (442 aa).

The N-terminal stretch at 1–18 (MDLLLGVLSSGILQNALP) is a signal peptide. Positions 19–62 (FVAGVGRVKRPKRVKLEEAFREAHLCRPVIPYRAPTPYTGGRVK) are important for catalytic activity. Residues N69 and N112 are each glycosylated (N-linked (GlcNAc...) asparagine). H146 is a catalytic residue. Ca(2+) is bound by residues D161, D177, and D178. C201 is a catalytic residue. D208 contacts Ca(2+). N-linked (GlcNAc...) asparagine glycans are attached at residues N234, N257, N282, and N331. Positions 336-442 (HYVPQQYLQP…QYLSGVGKPL (107 aa)) are negatively regulates catalytic activity. Residues 348 to 371 (PPQPYYPPPQPQQPYYPPPQPQQP) are compositionally biased toward pro residues. Residues 348–442 (PPQPYYPPPQ…QYLSGVGKPL (95 aa)) are disordered. Residues 372 to 382 (YYPSSQLPTQY) are compositionally biased toward low complexity. Residues 422-434 (PSDQSTYYSSAQY) are compositionally biased toward polar residues.

Belongs to the peptidase C14B family. In terms of processing, in epimastigotes, the unprocessed enzyme appears to be the main form. Auto-processing is dispensable for catalytic activity towards small oligopeptide substrates.

It localises to the recycling endosome. Activated by Ca(2+). Cysteine protease that cleaves specifically after arginine or lysine residues. May play a role in apoptosis. The polypeptide is Metacaspase-5 (Trypanosoma cruzi (strain CL Brener)).